The following is a 347-amino-acid chain: Beta-hexosaminidase (347 aa).

Substrate is bound by residues aspartate 64, arginine 72, arginine 138, and 168 to 169; that span reads KH. The active-site Proton donor/acceptor is the histidine 181. Aspartate 251 serves as the catalytic Nucleophile.

This sequence belongs to the glycosyl hydrolase 3 family. NagZ subfamily.

It localises to the cytoplasm. It carries out the reaction Hydrolysis of terminal non-reducing N-acetyl-D-hexosamine residues in N-acetyl-beta-D-hexosaminides.. The protein operates within cell wall biogenesis; peptidoglycan recycling. In terms of biological role, plays a role in peptidoglycan recycling by cleaving the terminal beta-1,4-linked N-acetylglucosamine (GlcNAc) from peptide-linked peptidoglycan fragments, giving rise to free GlcNAc, anhydro-N-acetylmuramic acid and anhydro-N-acetylmuramic acid-linked peptides. This chain is Beta-hexosaminidase, found in Thioalkalivibrio sulfidiphilus (strain HL-EbGR7).